Here is a 424-residue protein sequence, read N- to C-terminus: UDP-N-acetylglucosamine 1-carboxyvinyltransferase (424 aa).

Lys-22–Asn-23 is a phosphoenolpyruvate binding site. Arg-93 serves as a coordination point for UDP-N-acetyl-alpha-D-glucosamine. Catalysis depends on Cys-117, which acts as the Proton donor. Residue Cys-117 is modified to 2-(S-cysteinyl)pyruvic acid O-phosphothioketal. Residues Arg-122–Leu-126, Asp-307, and Val-329 each bind UDP-N-acetyl-alpha-D-glucosamine.

This sequence belongs to the EPSP synthase family. MurA subfamily.

It is found in the cytoplasm. It catalyses the reaction phosphoenolpyruvate + UDP-N-acetyl-alpha-D-glucosamine = UDP-N-acetyl-3-O-(1-carboxyvinyl)-alpha-D-glucosamine + phosphate. Its pathway is cell wall biogenesis; peptidoglycan biosynthesis. Cell wall formation. Adds enolpyruvyl to UDP-N-acetylglucosamine. This Pelodictyon phaeoclathratiforme (strain DSM 5477 / BU-1) protein is UDP-N-acetylglucosamine 1-carboxyvinyltransferase.